The primary structure comprises 347 residues: Phosphate acyltransferase (347 aa).

This sequence belongs to the PlsX family. As to quaternary structure, homodimer. Probably interacts with PlsY.

Its subcellular location is the cytoplasm. The catalysed reaction is a fatty acyl-[ACP] + phosphate = an acyl phosphate + holo-[ACP]. The protein operates within lipid metabolism; phospholipid metabolism. Its function is as follows. Catalyzes the reversible formation of acyl-phosphate (acyl-PO(4)) from acyl-[acyl-carrier-protein] (acyl-ACP). This enzyme utilizes acyl-ACP as fatty acyl donor, but not acyl-CoA. This chain is Phosphate acyltransferase, found in Oleidesulfovibrio alaskensis (strain ATCC BAA-1058 / DSM 17464 / G20) (Desulfovibrio alaskensis).